Here is a 785-residue protein sequence, read N- to C-terminus: Terminal nucleotidyltransferase 4A (785 aa).

Positions 56–184 (AAGRAAPAAG…QFHPGRRKRE (129 aa)) are disordered. The span at 68-85 (GPAPAASSPPPAPGPAAL) shows a compositional bias: pro residues. Composition is skewed to low complexity over residues 86–98 (PPAL…PAAD) and 106–145 (SPSL…AGSG). Positions 290 and 292 each coordinate Mg(2+). Residues glycine 353, lysine 378, serine 396, and tyrosine 397 each coordinate ATP. The 60-residue stretch at 421–480 (NLGMLLVEFFELYGRNFNYLKTGIRIKEGGAYIAKEEIMKAMTSGYRPSMLCIEDPLLPG) folds into the PAP-associated domain. Residues asparagine 481 and arginine 485 each coordinate ATP. Over residues 593–611 (PQLLSSGSSASSVSSLSGS) the composition is skewed to low complexity. 2 disordered regions span residues 593-625 (PQLL…TPSV) and 731-785 (KGSH…SLSR). Positions 757-774 (RGHHQYNRTGWRRKKHAH) are enriched in basic residues.

Belongs to the DNA polymerase type-B-like family. In terms of assembly, component of a nuclear TRAMP-like complex, an ATP-dependent exosome regulatory complex consisting of a helicase (MTREX), an oligadenylate polymerase (TENT4B or TENT4A), and a substrate specific RNA-binding factor (ZCCHC7 or ZCCHC8). Several TRAMP-like complexes exist with specific compositions and are associated with nuclear, or nucleolar RNA exosomes. It depends on Mg(2+) as a cofactor. The cofactor is Mn(2+).

It localises to the cytoplasm. Its subcellular location is the nucleus. The protein resides in the nucleoplasm. The catalysed reaction is RNA(n) + ATP = RNA(n)-3'-adenine ribonucleotide + diphosphate. Functionally, terminal nucleotidyltransferase that catalyzes preferentially the transfer of ATP and GTP on RNA 3' poly(A) tail creating a heterogeneous 3' poly(A) tail leading to mRNAs stabilization by protecting mRNAs from active deadenylation. Also functions as a catalytic subunit of a TRAMP-like complex which has a poly(A) RNA polymerase activity and is involved in a post-transcriptional quality control mechanism. Polyadenylation with short oligo(A) tails is required for the degradative activity of the exosome on several of its nuclear RNA substrates. Has no terminal uridylyltransferase activity, and does not play a role in replication-dependent histone mRNA degradation via uridylation. The chain is Terminal nucleotidyltransferase 4A from Mus musculus (Mouse).